A 179-amino-acid polypeptide reads, in one-letter code: Large ribosomal subunit protein uL6 (179 aa).

The protein belongs to the universal ribosomal protein uL6 family. As to quaternary structure, part of the 50S ribosomal subunit.

Functionally, this protein binds to the 23S rRNA, and is important in its secondary structure. It is located near the subunit interface in the base of the L7/L12 stalk, and near the tRNA binding site of the peptidyltransferase center. The polypeptide is Large ribosomal subunit protein uL6 (Fructilactobacillus sanfranciscensis (Lactobacillus sanfranciscensis)).